A 5073-amino-acid chain; its full sequence is Malformin synthetase mlfA (5073 aa).

Residues 194–585 (ERHATNRPHS…CGRADTQVKL (392 aa)) form an adenylation 1 region. The Carrier 1 domain occupies 726-799 (SRLEQEVQLA…EAASLAEVQE (74 aa)). Ser760 is modified (O-(pantetheine 4'-phosphoryl)serine). Residues 837–1268 (EDVFPCTTMQ…ALNTLSLLQA (432 aa)) form a condensation 1 region. The interval 1296–1685 (DRWVTRHPEG…GRKDTQVKLR (390 aa)) is adenylation 2. One can recognise a Carrier 2 domain in the interval 1823–1900 (TPASELERTL…QLAAEVGEPA (78 aa)). Position 1860 is an O-(pantetheine 4'-phosphoryl)serine (Ser1860). Disordered regions lie at residues 1901-1930 (GQSA…DGVD) and 1963-1984 (GGSS…SSSK). Composition is skewed to low complexity over residues 1903-1927 (SASS…STND) and 1965-1982 (SSSN…SSSS). The segment at 2031–2446 (EDIYPATALQ…AVSCSDTETL (416 aa)) is condensation 2. Positions 2469–2861 (SRTPHAPAVC…IGRRDGQLKL (393 aa)) are adenylation 3. One can recognise a Carrier 3 domain in the interval 2997-3073 (RPKTSQEQEM…QLICHLNSIR (77 aa)). At Ser3034 the chain carries O-(pantetheine 4'-phosphoryl)serine. Condensation stretches follow at residues 3090–3555 (WVAL…TYDQ) and 3576–3995 (DIYP…EQLV). Residues 4020 to 4410 (HASRQAVCAW…VGRKDNQIKF (391 aa)) are adenylation 4. Positions 4544-4620 (MPSTAAERKM…DLGDQARSPN (77 aa)) constitute a Carrier 4 domain. Ser4581 is subject to O-(pantetheine 4'-phosphoryl)serine. Residues 4611-4633 (DLGDQARSPNADNQRVSTASSAG) form a disordered region. Polar residues predominate over residues 4617-4631 (RSPNADNQRVSTASS). The interval 4657–4991 (DVLPTTSFQR…LQTIVQHQNN (335 aa)) is condensation 5.

Belongs to the NRP synthetase family.

It participates in secondary metabolite biosynthesis. Functionally, nonribosomal peptide synthetase; part of the gene cluster that mediates the biosynthesis of malformins, cyclic pentapeptides with a disulfide bond between 2 consecutive cysteins, that show potential anti-tumor as well as antimalarial and antitrypanosomal properties. The nonribosomal peptide synthetase mlfA is responsible of the formation of the cyclic pentapeptide. The malformin biosynthesis clusters in malformin-producing fungi also contain enzymes involved in the formation of the disulfide bond between the two consecutive cysteins within malformins, in addition to additional tailoring enzymes such as methyltransferases or oxidoreductases. They are also composed of up to 4 major facilitator superfamily transporters, and transcription factors probably involved in the regulation of the expression of those clusters. The polypeptide is Malformin synthetase mlfA (Aspergillus tubingensis (strain CBS 134.48)).